Consider the following 514-residue polypeptide: GTPase Obg (514 aa).

Residues 2-159 enclose the Obg domain; that stretch reads ATFVDRVTVH…GDILLELKTV (158 aa). Positions 62–88 are disordered; that stretch reads RRPHRSSGNGGFGMGDHRSGHTGEDLE. The span at 76-85 shows a compositional bias: basic and acidic residues; it reads GDHRSGHTGE. The OBG-type G domain occupies 160–336; sequence ADIALVGYPS…LSFALAELVE (177 aa). Residues 166-173, 191-195, 212-215, 288-291, and 317-319 contribute to the GTP site; these read GYPSAGKS, FTTLH, DVPG, NKID, and STV. S173 and T193 together coordinate Mg(2+). One can recognise an OCT domain in the interval 356–440; the sequence is PKTVDDSGFV…ENGVVFDWEP (85 aa).

The protein belongs to the TRAFAC class OBG-HflX-like GTPase superfamily. OBG GTPase family. In terms of assembly, monomer. Requires Mg(2+) as cofactor.

Its subcellular location is the cytoplasm. Its function is as follows. An essential GTPase which binds GTP, GDP and possibly (p)ppGpp with moderate affinity, with high nucleotide exchange rates and a fairly low GTP hydrolysis rate. Plays a role in control of the cell cycle, stress response, ribosome biogenesis and in those bacteria that undergo differentiation, in morphogenesis control. This is GTPase Obg from Leifsonia xyli subsp. xyli (strain CTCB07).